The primary structure comprises 93 residues: Small ribosomal subunit protein bS18 (93 aa).

The protein belongs to the bacterial ribosomal protein bS18 family. As to quaternary structure, part of the 30S ribosomal subunit. Forms a tight heterodimer with protein bS6.

Binds as a heterodimer with protein bS6 to the central domain of the 16S rRNA, where it helps stabilize the platform of the 30S subunit. The polypeptide is Small ribosomal subunit protein bS18 (Delftia acidovorans (strain DSM 14801 / SPH-1)).